The following is a 586-amino-acid chain: Phosphomethylpyrimidine synthase (586 aa).

Residues Met1–Val33 form a disordered region. Positions Val22–Val33 are enriched in basic and acidic residues. Substrate is bound by residues Asn193, Met222, Tyr251, His287, Ser307–Gly309, Asp348–Arg351, and Glu387. His391 contributes to the Zn(2+) binding site. Tyr414 contacts substrate. His455 provides a ligand contact to Zn(2+). [4Fe-4S] cluster contacts are provided by Cys535, Cys538, and Cys543.

This sequence belongs to the ThiC family. [4Fe-4S] cluster serves as cofactor.

The enzyme catalyses 5-amino-1-(5-phospho-beta-D-ribosyl)imidazole + S-adenosyl-L-methionine = 4-amino-2-methyl-5-(phosphooxymethyl)pyrimidine + CO + 5'-deoxyadenosine + formate + L-methionine + 3 H(+). It functions in the pathway cofactor biosynthesis; thiamine diphosphate biosynthesis. Its function is as follows. Catalyzes the synthesis of the hydroxymethylpyrimidine phosphate (HMP-P) moiety of thiamine from aminoimidazole ribotide (AIR) in a radical S-adenosyl-L-methionine (SAM)-dependent reaction. The polypeptide is Phosphomethylpyrimidine synthase (Bacillus cereus (strain G9842)).